The primary structure comprises 144 residues: Ribosome maturation factor RimP (144 aa).

This sequence belongs to the RimP family.

Its subcellular location is the cytoplasm. In terms of biological role, required for maturation of 30S ribosomal subunits. The sequence is that of Ribosome maturation factor RimP from Azoarcus sp. (strain BH72).